Reading from the N-terminus, the 50-residue chain is Large ribosomal subunit protein bL33A (50 aa).

This sequence belongs to the bacterial ribosomal protein bL33 family.

This Mycoplasmopsis pulmonis (strain UAB CTIP) (Mycoplasma pulmonis) protein is Large ribosomal subunit protein bL33A (rpmG1).